A 441-amino-acid polypeptide reads, in one-letter code: Protein dcd1A (441 aa).

An N-terminal signal peptide occupies residues 1–23 (MKIFNKLIFLIIQCILIISVTNA). Residues N45, N261, N308, and N419 are each glycosylated (N-linked (GlcNAc...) asparagine).

The protein localises to the secreted. This is Protein dcd1A (dcd1A) from Dictyostelium discoideum (Social amoeba).